Here is an 84-residue protein sequence, read N- to C-terminus: uncharacterized protein (84 aa).

It belongs to the csb family.

This is an uncharacterized protein from Dictyostelium discoideum (Social amoeba).